The primary structure comprises 376 residues: Probable dual-specificity RNA methyltransferase RlmN (376 aa).

E96 functions as the Proton acceptor in the catalytic mechanism. The region spanning 102–346 is the Radical SAM core domain; sequence YPDRSTVCVS…CTVRVERGVE (245 aa). C109 and C351 are disulfide-bonded. Residues C116, C120, and C123 each contribute to the [4Fe-4S] cluster site. Residues 171–172, S203, 226–228, and N308 contribute to the S-adenosyl-L-methionine site; these read GE and SLH. The active-site S-methylcysteine intermediate is C351.

It belongs to the radical SAM superfamily. RlmN family. [4Fe-4S] cluster serves as cofactor.

Its subcellular location is the cytoplasm. The catalysed reaction is adenosine(2503) in 23S rRNA + 2 reduced [2Fe-2S]-[ferredoxin] + 2 S-adenosyl-L-methionine = 2-methyladenosine(2503) in 23S rRNA + 5'-deoxyadenosine + L-methionine + 2 oxidized [2Fe-2S]-[ferredoxin] + S-adenosyl-L-homocysteine. It catalyses the reaction adenosine(37) in tRNA + 2 reduced [2Fe-2S]-[ferredoxin] + 2 S-adenosyl-L-methionine = 2-methyladenosine(37) in tRNA + 5'-deoxyadenosine + L-methionine + 2 oxidized [2Fe-2S]-[ferredoxin] + S-adenosyl-L-homocysteine. In terms of biological role, specifically methylates position 2 of adenine 2503 in 23S rRNA and position 2 of adenine 37 in tRNAs. This chain is Probable dual-specificity RNA methyltransferase RlmN, found in Chloroflexus aurantiacus (strain ATCC 29366 / DSM 635 / J-10-fl).